Here is a 457-residue protein sequence, read N- to C-terminus: Protein unc-93 homolog A (457 aa).

The next 5 helical transmembrane spans lie at 8 to 28 (VLVLSFGFLLLFTAYGGLQSL), 42 to 62 (ALSTLYGGMLLSSMFLPPVLI), 65 to 85 (LGCKWTLVLAMCCYVAFSLGN), 86 to 106 (FYASWYTLIPASVLVGLGAAA), and 140 to 160 (IFFLIFQSSGVWGNLISSLVF). N190 carries an N-linked (GlcNAc...) asparagine glycan. 6 helical membrane-spanning segments follow: residues 202–222 (TLLGIYTGCGFLAVLLMAVFL), 257–277 (LRLLILLPMLSGFEQAFLSGD), 291–311 (FVGYVMICFGAADALCSVLFG), 320–340 (TVLFALGAVTQLACIIALLLW), 344–364 (PSQLPVFFVFPSLWGMADAVW), and 395–415 (FVIAFGYSTFLCVSVKLYVLL). Residues 438-457 (GPLAAGRTKPAEDGATQTKL) form a disordered region.

It belongs to the unc-93 family.

It localises to the cell membrane. This is Protein unc-93 homolog A (UNC93A) from Bos taurus (Bovine).